Consider the following 529-residue polypeptide: Probable biotin-dependent acyl-coenzyme A carboxylase beta2 subunit (529 aa).

Residues 20–271 enclose the CoA carboxyltransferase N-terminal domain; the sequence is MSGKLDEINA…IKQGPAPAPV (252 aa). The CoA carboxyltransferase C-terminal domain occupies 270-520; it reads PVTEPLFDAE…SAIANGPIKG (251 aa).

It belongs to the AccD/PCCB family. As to quaternary structure, the biotin-dependent acyl-CoA carboxylase complex is composed of an AccA protein, which contains the biotin carboxylase (BC) and biotin carboxyl carrier protein (BCCP) domains, and an AccD protein, which contains the carboxyl transferase (CT) domain.

Its function is as follows. Component of a biotin-dependent acyl-CoA carboxylase complex. This subunit transfers the CO2 from carboxybiotin to the CoA ester substrate. The polypeptide is Probable biotin-dependent acyl-coenzyme A carboxylase beta2 subunit (accD2) (Mycobacterium tuberculosis (strain ATCC 25618 / H37Rv)).